Consider the following 610-residue polypeptide: Putative protein tag-250 (610 aa).

2 consecutive Tudor domains span residues 149–260 (VALK…LLPP) and 386–506 (MPMS…KIGG).

This chain is Putative protein tag-250 (tag-250), found in Caenorhabditis elegans.